Here is a 420-residue protein sequence, read N- to C-terminus: Histidine--tRNA ligase (420 aa).

Belongs to the class-II aminoacyl-tRNA synthetase family. In terms of assembly, homodimer.

The protein resides in the cytoplasm. The catalysed reaction is tRNA(His) + L-histidine + ATP = L-histidyl-tRNA(His) + AMP + diphosphate + H(+). This is Histidine--tRNA ligase from Thermodesulfovibrio yellowstonii (strain ATCC 51303 / DSM 11347 / YP87).